A 134-amino-acid chain; its full sequence is Outer membrane lipoprotein RcsF (134 aa).

A signal peptide spans 1–15 (MRALPICLVALMLSG). Residue Cys-16 is the site of N-palmitoyl cysteine attachment. A lipid anchor (S-diacylglycerol cysteine) is attached at Cys-16. Disordered regions lie at residues 22 to 48 (SPVE…RATP) and 67 to 88 (GEVS…IPTA). Over residues 72 to 82 (DSCQASNQDSP) the composition is skewed to polar residues. 2 disulfide bridges follow: Cys-74/Cys-118 and Cys-109/Cys-124.

Belongs to the RcsF family.

It localises to the cell outer membrane. Essential component of the Rcs signaling system, which controls transcription of numerous genes. Plays a role in signal transduction from the cell surface to the histidine kinase RcsC. May detect outer membrane defects. The chain is Outer membrane lipoprotein RcsF from Escherichia coli O6:H1 (strain CFT073 / ATCC 700928 / UPEC).